The following is a 275-amino-acid chain: 4-hydroxy-3-methylbut-2-enyl diphosphate reductase (275 aa).

Residue Cys12 participates in [4Fe-4S] cluster binding. Positions 36 and 70 each coordinate (2E)-4-hydroxy-3-methylbut-2-enyl diphosphate. Residues His36 and His70 each coordinate dimethylallyl diphosphate. 2 residues coordinate isopentenyl diphosphate: His36 and His70. Cys92 is a binding site for [4Fe-4S] cluster. His120 lines the (2E)-4-hydroxy-3-methylbut-2-enyl diphosphate pocket. Residue His120 participates in dimethylallyl diphosphate binding. Residue His120 coordinates isopentenyl diphosphate. The active-site Proton donor is the Glu122. (2E)-4-hydroxy-3-methylbut-2-enyl diphosphate is bound at residue Thr158. Cys186 lines the [4Fe-4S] cluster pocket. (2E)-4-hydroxy-3-methylbut-2-enyl diphosphate-binding residues include Ser214, Ser215, Asn216, and Ser258. 4 residues coordinate dimethylallyl diphosphate: Ser214, Ser215, Asn216, and Ser258. Isopentenyl diphosphate-binding residues include Ser214, Ser215, Asn216, and Ser258.

This sequence belongs to the IspH family. Requires [4Fe-4S] cluster as cofactor.

It catalyses the reaction isopentenyl diphosphate + 2 oxidized [2Fe-2S]-[ferredoxin] + H2O = (2E)-4-hydroxy-3-methylbut-2-enyl diphosphate + 2 reduced [2Fe-2S]-[ferredoxin] + 2 H(+). The enzyme catalyses dimethylallyl diphosphate + 2 oxidized [2Fe-2S]-[ferredoxin] + H2O = (2E)-4-hydroxy-3-methylbut-2-enyl diphosphate + 2 reduced [2Fe-2S]-[ferredoxin] + 2 H(+). The protein operates within isoprenoid biosynthesis; dimethylallyl diphosphate biosynthesis; dimethylallyl diphosphate from (2E)-4-hydroxy-3-methylbutenyl diphosphate: step 1/1. It participates in isoprenoid biosynthesis; isopentenyl diphosphate biosynthesis via DXP pathway; isopentenyl diphosphate from 1-deoxy-D-xylulose 5-phosphate: step 6/6. Catalyzes the conversion of 1-hydroxy-2-methyl-2-(E)-butenyl 4-diphosphate (HMBPP) into a mixture of isopentenyl diphosphate (IPP) and dimethylallyl diphosphate (DMAPP). Acts in the terminal step of the DOXP/MEP pathway for isoprenoid precursor biosynthesis. In Sulfurimonas denitrificans (strain ATCC 33889 / DSM 1251) (Thiomicrospira denitrificans (strain ATCC 33889 / DSM 1251)), this protein is 4-hydroxy-3-methylbut-2-enyl diphosphate reductase.